We begin with the raw amino-acid sequence, 297 residues long: Lymphocyte antigen 6 complex locus protein G6f (297 aa).

Residues 1–16 form the signal peptide; it reads MAVLFLLLFLCGTPQA. One can recognise an Ig-like V-type domain in the interval 17 to 122; it reads ADNMQAIYVA…HNYQNWRVYD (106 aa). Residues 17–235 lie on the Extracellular side of the membrane; the sequence is ADNMQAIYVA…APSTGWDMPW (219 aa). An intrachain disulfide couples Cys-35 to Cys-106. An N-linked (GlcNAc...) asparagine glycan is attached at Asn-88. The helical transmembrane segment at 236–256 threads the bilayer; it reads ILMLLLTMGQGVVILALSIVL. Over 257–297 the chain is Cytoplasmic; the sequence is WRQRVRGAPGRDASIPQFKPEIQVYENIHLARLGPPAHKPR. The residue at position 281 (Tyr-281) is a Phosphotyrosine.

Homodimer; disulfide-linked. Interacts with GRB2 and GRB7 in a phosphorylation-dependent manner. Post-translationally, N-glycosylated.

It localises to the cell membrane. Its function is as follows. May play a role in the downstream signal transduction pathways involving GRB2 and GRB7. This chain is Lymphocyte antigen 6 complex locus protein G6f (LY6G6F), found in Homo sapiens (Human).